Here is a 334-residue protein sequence, read N- to C-terminus: Flotillin-like protein FloA (334 aa).

A helical membrane pass occupies residues 3–23; it reads LYLIFLIVVGVVGLVLVGLFL.

This sequence belongs to the flotillin-like FloA family. As to quaternary structure, homooligomerizes.

It localises to the cell membrane. It is found in the membrane raft. In terms of biological role, found in functional membrane microdomains (FMM) that may be equivalent to eukaryotic membrane rafts. FMMs are highly dynamic and increase in number as cells age. Flotillins are thought to be important factors in membrane fluidity. This is Flotillin-like protein FloA from Opitutus terrae (strain DSM 11246 / JCM 15787 / PB90-1).